The following is a 118-amino-acid chain: Protein BEX4 (118 aa).

The interval 14-50 is disordered; sequence VEKDKKDKKGGKASKQSEEEPHHLEEVENKKPGGNVR. Residues 28–44 are compositionally biased toward basic and acidic residues; it reads KQSEEEPHHLEEVENKK. The tract at residues 30–88 is interaction with SIRT2; the sequence is SEEEPHHLEEVENKKPGGNVRRKVRRLVPNFLWAIPNRHVDRNEGGEDVGRFVVQGTEV. An interaction with alpha-tubulin region spans residues 30–118; that stretch reads SEEEPHHLEE…DNHYDFCLIP (89 aa). Residue C115 participates in Zn(2+) binding.

The protein belongs to the BEX family. In terms of assembly, interacts with alpha-tubulin. Interacts with SIRT2. Ubiquitinated and degraded by the proteasome. As to expression, expressed in both Sertoli and germ cells as well as interstitial area of the testis (at protein level).

The protein localises to the cytoplasm. The protein resides in the cytoskeleton. It is found in the spindle pole. It localises to the nucleus. Its function is as follows. May play a role in microtubule deacetylation by negatively regulating the SIRT2 deacetylase activity toward alpha-tubulin and thereby participate in the control of cell cycle progression and genomic stability. In absence of reductive stress, acts as a pseudosubstrate for the CRL2(FEM1B) complex: associates with FEM1B via zinc, thereby preventing association between FEM1B and its substrates. This Mus musculus (Mouse) protein is Protein BEX4.